The following is a 95-amino-acid chain: Protein RnfH (95 aa).

This sequence belongs to the UPF0125 (RnfH) family.

This is Protein RnfH from Methylococcus capsulatus (strain ATCC 33009 / NCIMB 11132 / Bath).